We begin with the raw amino-acid sequence, 599 residues long: MFS-type transporter ucsM (599 aa).

Residues 23 to 34 (AHHHGKEREAHR) show a composition bias toward basic and acidic residues. Positions 23-42 (AHHHGKEREAHRQSLSSVPG) are disordered. 8 helical membrane-spanning segments follow: residues 147 to 167 (VALG…GAWL), 178 to 198 (ILIG…GAVP), 204 to 224 (GKGT…AGLF), 263 to 283 (IMLI…ATVY), 291 to 311 (WLAF…LWYL), 386 to 406 (IFLY…ILPS), 424 to 444 (FNPI…YPAL), and 454 to 474 (ISRI…SSLV). N-linked (GlcNAc...) asparagine glycosylation is present at Asn-517. The next 2 helical transmembrane spans lie at 539–559 (LFLF…PAIV) and 563–583 (LVWV…IFWV).

It belongs to the major facilitator superfamily. Proton-dependent oligopeptide transporter (POT/PTR) (TC 2.A.17) family.

The protein localises to the membrane. In terms of biological role, MFS-type transporter; part of the gene cluster that mediates the biosynthesis of UCS1025A, a member of the pyrrolizidinone family that acts as a strong telomerase inhibitor and displays potent antibacterial and antitumor properties. These compounds share a hemiaminal-containing pyrrolizidinone core fused with a gamma-lactone, giving a furopyrrolizidine that is connected to a decalin fragment. The chain is MFS-type transporter ucsM from Acremonium sp.